The following is a 588-amino-acid chain: Adenine deaminase (588 aa).

Belongs to the metallo-dependent hydrolases superfamily. Adenine deaminase family. As to quaternary structure, homodimer. The cofactor is Mn(2+).

It catalyses the reaction adenine + H2O + H(+) = hypoxanthine + NH4(+). The sequence is that of Adenine deaminase from Escherichia coli O7:K1 (strain IAI39 / ExPEC).